Consider the following 146-residue polypeptide: Transcriptional regulator MraZ (146 aa).

2 consecutive SpoVT-AbrB domains span residues Asn5–Glu51 and Gly80–Ala123.

It belongs to the MraZ family. Forms oligomers.

It is found in the cytoplasm. The protein resides in the nucleoid. The protein is Transcriptional regulator MraZ of Acidobacterium capsulatum (strain ATCC 51196 / DSM 11244 / BCRC 80197 / JCM 7670 / NBRC 15755 / NCIMB 13165 / 161).